The primary structure comprises 94 residues: Small ribosomal subunit protein bS18 (94 aa).

Low complexity predominate over residues 1–12 (MSEQNSRPQNSE). Residues 1–29 (MSEQNSRPQNSERPQRSRRPQGGPRRRRK) form a disordered region. Positions 16 to 29 (RSRRPQGGPRRRRK) are enriched in basic residues.

The protein belongs to the bacterial ribosomal protein bS18 family. In terms of assembly, part of the 30S ribosomal subunit. Forms a tight heterodimer with protein bS6.

Its function is as follows. Binds as a heterodimer with protein bS6 to the central domain of the 16S rRNA, where it helps stabilize the platform of the 30S subunit. The polypeptide is Small ribosomal subunit protein bS18 (Leuconostoc mesenteroides subsp. mesenteroides (strain ATCC 8293 / DSM 20343 / BCRC 11652 / CCM 1803 / JCM 6124 / NCDO 523 / NBRC 100496 / NCIMB 8023 / NCTC 12954 / NRRL B-1118 / 37Y)).